The chain runs to 249 residues: DNA polymerase sliding clamp (249 aa).

Belongs to the PCNA family. In terms of assembly, homotrimer. The subunits circularize to form a toroid; DNA passes through its center. Replication factor C (RFC) is required to load the toroid on the DNA.

In terms of biological role, sliding clamp subunit that acts as a moving platform for DNA processing. Responsible for tethering the catalytic subunit of DNA polymerase and other proteins to DNA during high-speed replication. The polypeptide is DNA polymerase sliding clamp (Thermococcus fumicolans).